The chain runs to 257 residues: GTP cyclohydrolase FolE2 (257 aa).

Belongs to the GTP cyclohydrolase IV family.

The catalysed reaction is GTP + H2O = 7,8-dihydroneopterin 3'-triphosphate + formate + H(+). It functions in the pathway cofactor biosynthesis; 7,8-dihydroneopterin triphosphate biosynthesis; 7,8-dihydroneopterin triphosphate from GTP: step 1/1. Converts GTP to 7,8-dihydroneopterin triphosphate. This is GTP cyclohydrolase FolE2 from Syntrophobacter fumaroxidans (strain DSM 10017 / MPOB).